We begin with the raw amino-acid sequence, 492 residues long: 2-succinylbenzoate--CoA ligase (492 aa).

Belongs to the ATP-dependent AMP-binding enzyme family. MenE subfamily.

It catalyses the reaction 2-succinylbenzoate + ATP + CoA = 2-succinylbenzoyl-CoA + AMP + diphosphate. It participates in quinol/quinone metabolism; 1,4-dihydroxy-2-naphthoate biosynthesis; 1,4-dihydroxy-2-naphthoate from chorismate: step 5/7. Its pathway is quinol/quinone metabolism; menaquinone biosynthesis. In terms of biological role, converts 2-succinylbenzoate (OSB) to 2-succinylbenzoyl-CoA (OSB-CoA). The polypeptide is 2-succinylbenzoate--CoA ligase (Staphylococcus aureus (strain MRSA252)).